The primary structure comprises 520 residues: MLHKSPSRKRFASPLHLGCILTLTVLCLIAYYFALPDYLSVGKSSSRGAMDQKSDGTFRLKSIYRHGVGANHRLHQRLEVTPEVISAAGMLYQETTTQGQDFEDQEPLWTTNAEYATTNPFDFEFELRRMPLLMKRMKERDPEFIESYIYGETYMTEEEEHAMWIDDDIVAPNITDRGTVVSLALMSSNAYVRIPQTGDWRNVTEPWNETEPEDFGWDGDGIRGHVFYNEVENIVVLSIKGTSAQGLPGSGEDETTGNDKINDNLLFSCCCARVSYLWTTVCDCYVKSYICDESCLEKELRRKDRFYSAVVDIYKGVLKEYPDAAIWVTGHSLGGALASLLGRTFGLPAVAFESPGELLPSKRLHLPFPPGLPSYMEGIWHFGHNADPIFMGTCNGASSSCSLVGYAMETACHTGRVCVYDVVNDKGWSVNMFNHRIHKVIDEVLLGYEQAAKCVEPEPCVDCYNWKFIPSRDWESSSRLITKTKSHAAPTTTTRTTATTTSSSTCVGRNWLGFCTKYEL.

The Cytoplasmic portion of the chain corresponds to 1-14 (MLHKSPSRKRFASP). The helical; Signal-anchor for type II membrane protein transmembrane segment at 15–35 (LHLGCILTLTVLCLIAYYFAL) threads the bilayer. The Lumenal portion of the chain corresponds to 36-520 (PDYLSVGKSS…WLGFCTKYEL (485 aa)). N-linked (GlcNAc...) asparagine glycans are attached at residues Asn-173, Asn-202, and Asn-208. Ser-332 acts as the Charge relay system in catalysis.

It belongs to the AB hydrolase superfamily. Lipase family. As to quaternary structure, binds to both phosphatidylinositol (PI) and phosphatidylinositol 3,5-bisphosphate (PIP2). Post-translationally, glycosylated.

Its subcellular location is the endosome. It is found in the multivesicular body membrane. It localises to the prevacuolar compartment membrane. The catalysed reaction is a triacylglycerol + H2O = a diacylglycerol + a fatty acid + H(+). Functionally, lipase which is essential for lysis of subvacuolar cytoplasm to vacuole targeted bodies and intravacuolar autophagic bodies. Involved in the lysis of intravacuolar multivesicular body (MVB) vesicles. The intravacuolar membrane disintegration by ATG15 is critical to life span extension. The protein is Putative lipase ATG15 (ATG15) of Saccharomyces cerevisiae (strain ATCC 204508 / S288c) (Baker's yeast).